The sequence spans 360 residues: Dynein intermediate light chain dil1 (360 aa).

This sequence belongs to the dynein light intermediate chain DYN3 family. In terms of assembly, the dynein complex consists of at least two heavy chains and a number of intermediate and light chains. Interacts with rga3, sec10, sec16, syp1, rvb2, spbc19c7.04c, spbc2f12.05 and spac3a11.10c. The N-terminal part is acetylated.

It is found in the cytoplasm. The protein localises to the cytoskeleton. Functionally, component of the cytoplasmic dynein which acts as a motor for the intracellular retrograde motility of vesicles and organelles along microtubules. Promotes oscillatory nuclear movement and efficient pairing of homologous centromeres during meiotic prophase. In Schizosaccharomyces pombe (strain 972 / ATCC 24843) (Fission yeast), this protein is Dynein intermediate light chain dil1 (dil1).